We begin with the raw amino-acid sequence, 464 residues long: Glycine--tRNA ligase (464 aa).

Substrate is bound by residues Arg104 and Glu175. Residues 207-209 (RNE), 217-222 (FRTREF), 292-293 (EL), and 336-339 (GVNR) each bind ATP. Substrate is bound at residue 222–226 (FEQME). Substrate is bound at residue 332 to 336 (EPALG).

Belongs to the class-II aminoacyl-tRNA synthetase family. In terms of assembly, homodimer.

The protein resides in the cytoplasm. It carries out the reaction tRNA(Gly) + glycine + ATP = glycyl-tRNA(Gly) + AMP + diphosphate. Its function is as follows. Catalyzes the attachment of glycine to tRNA(Gly). In Leptospira borgpetersenii serovar Hardjo-bovis (strain JB197), this protein is Glycine--tRNA ligase.